A 438-amino-acid polypeptide reads, in one-letter code: tRNA modification GTPase MnmE (438 aa).

The (6S)-5-formyl-5,6,7,8-tetrahydrofolate site is built by Arg21, Glu79, and Lys118. The TrmE-type G domain maps to 215–362; sequence GFSIVLIGAP…LEARIEQIVR (148 aa). Asn225 lines the K(+) pocket. GTP contacts are provided by residues 225 to 230, 244 to 250, and 269 to 272; these read NAGKSS, TDIPGTT, and DTAG. A Mg(2+)-binding site is contributed by Ser229. Residues Thr244, Ile246, and Thr249 each contribute to the K(+) site. Thr250 lines the Mg(2+) pocket. Residue Lys438 participates in (6S)-5-formyl-5,6,7,8-tetrahydrofolate binding.

Belongs to the TRAFAC class TrmE-Era-EngA-EngB-Septin-like GTPase superfamily. TrmE GTPase family. In terms of assembly, homodimer. Heterotetramer of two MnmE and two MnmG subunits. K(+) is required as a cofactor.

It localises to the cytoplasm. In terms of biological role, exhibits a very high intrinsic GTPase hydrolysis rate. Involved in the addition of a carboxymethylaminomethyl (cmnm) group at the wobble position (U34) of certain tRNAs, forming tRNA-cmnm(5)s(2)U34. This is tRNA modification GTPase MnmE from Maricaulis maris (strain MCS10) (Caulobacter maris).